The sequence spans 364 residues: Aminomethyltransferase (364 aa).

Belongs to the GcvT family. In terms of assembly, the glycine cleavage system is composed of four proteins: P, T, L and H.

The enzyme catalyses N(6)-[(R)-S(8)-aminomethyldihydrolipoyl]-L-lysyl-[protein] + (6S)-5,6,7,8-tetrahydrofolate = N(6)-[(R)-dihydrolipoyl]-L-lysyl-[protein] + (6R)-5,10-methylene-5,6,7,8-tetrahydrofolate + NH4(+). The glycine cleavage system catalyzes the degradation of glycine. The polypeptide is Aminomethyltransferase (Geobacillus kaustophilus (strain HTA426)).